Reading from the N-terminus, the 341-residue chain is Elongation factor Ts (341 aa).

The tract at residues Thr80–Val83 is involved in Mg(2+) ion dislocation from EF-Tu.

This sequence belongs to the EF-Ts family.

The protein resides in the cytoplasm. Functionally, associates with the EF-Tu.GDP complex and induces the exchange of GDP to GTP. It remains bound to the aminoacyl-tRNA.EF-Tu.GTP complex up to the GTP hydrolysis stage on the ribosome. This Lactobacillus johnsonii (strain CNCM I-12250 / La1 / NCC 533) protein is Elongation factor Ts.